The primary structure comprises 233 residues: Bcl-2-like protein 1 (233 aa).

The short motif at 4-24 (SNRELVVDFLSYKLSQKGYSW) is the BH4 element. The tract at residues 27–73 (FSDVEENRTEAPEETEAERETPSAINGNPSWHLADSPAVNGATGHSS) is disordered. A Phosphoserine; by PLK3 modification is found at serine 49. At serine 62 the chain carries Phosphoserine; by CDK1. Residues 86–100 (VKQALREAGDEFELR) carry the BH3 motif. Positions 129-148 (ELFRDGVNWGRIVAFFSFGG) match the BH1 motif. The BH2 motif lies at 180–195 (PWIQENGGWDTFVDLY). The chain crosses the membrane as a helical span at residues 210–226 (FNRWFLTGMTVAGVVLL).

Belongs to the Bcl-2 family. In terms of assembly, homodimer. Interacts with BAD. Interacts with PGAM5. Interacts with HEBP2. Interacts with p53/TP53 and BBC3; interaction with BBC3 disrupts the interaction with p53/TP53. Interacts with ATP5F1A and ATP5F1B; the interactions mediate the association of isoform Bcl-X(L) with the mitochondrial membrane ATP synthase F(1)F(0) ATP synthase. Interacts with VDAC1. Interacts with BCL2L11 (via BH3). Interacts with RNF183. Interacts with GIMAP3/IAN4 and GIMAP5/IAN5. Interacts with GIMAP5 and HSPA8/HSC70; the interaction between HSPA8 and BCL2L1 is impaired in the absence of GIMAP5. Interacts with isoform 4 of CLU; this interaction releases and activates BAX and promotes cell death. Forms heterodimers with BAX, BAK or BCL2; heterodimerization with BAX does not seem to be required for anti-apoptotic activity. Interacts with isoform 1 of SIVA1; the interaction inhibits the anti-apoptotic activity. Interacts with IKZF3. Interacts with RTL10/BOP. Interacts with DNM1L and CLTA; DNM1L and BCL2L1 isoform BCL-X(L) may form a complex in synaptic vesicles that also contains clathrin and MFF. Interacts (via the loop between motifs BH4 and BH3) with NLRP1 (via LRR repeats), but not with NLRP2, NLRP3, NLRP4, PYCARD, nor MEFV. Interacts with BECN1. In terms of processing, proteolytically cleaved by caspases during apoptosis. The cleaved protein, lacking the BH4 motif, has pro-apoptotic activity. Phosphorylated on Ser-62 by CDK1. This phosphorylation is partial in normal mitotic cells, but complete in G2-arrested cells upon DNA-damage, thus promoting subsequent apoptosis probably by triggering caspases-mediated proteolysis. Phosphorylated by PLK3, leading to regulate the G2 checkpoint and progression to cytokinesis during mitosis. Phosphorylation at Ser-49 appears during the S phase and G2, disappears rapidly in early mitosis during prometaphase, metaphase and early anaphase, and re-appears during telophase and cytokinesis. Post-translationally, ubiquitinated by RNF183 during prolonged ER stress, leading to degradation by the proteosome. Widely expressed, with highest levels in the brain, thymus, bone marrow, and kidney. Bcl-X(L) and Bcl-X(delta-TM) expression is enhanced in B- and T-lymphocytes that have been activated.

The protein localises to the mitochondrion membrane. Its subcellular location is the nucleus membrane. It is found in the cytoplasm. The protein resides in the cytoskeleton. It localises to the microtubule organizing center. The protein localises to the centrosome. Its subcellular location is the mitochondrion inner membrane. It is found in the mitochondrion outer membrane. The protein resides in the mitochondrion matrix. It localises to the cytoplasmic vesicle. The protein localises to the secretory vesicle. Its subcellular location is the synaptic vesicle membrane. It is found in the cytosol. In terms of biological role, potent inhibitor of cell death. Inhibits activation of caspases. Appears to regulate cell death by blocking the voltage-dependent anion channel (VDAC) by binding to it and preventing the release of the caspase activator, CYC1, from the mitochondrial membrane. Also acts as a regulator of G2 checkpoint and progression to cytokinesis during mitosis. Isoform Bcl-X(L) also regulates presynaptic plasticity, including neurotransmitter release and recovery, number of axonal mitochondria as well as size and number of synaptic vesicle clusters. During synaptic stimulation, increases ATP availability from mitochondria through regulation of mitochondrial membrane ATP synthase F(1)F(0) activity and regulates endocytic vesicle retrieval in hippocampal neurons through association with DMN1L and stimulation of its GTPase activity in synaptic vesicles. May attenuate inflammation impairing NLRP1-inflammasome activation, hence CASP1 activation and IL1B release. Functionally, isoform Bcl-X(S) promotes apoptosis. The chain is Bcl-2-like protein 1 (Bcl2l1) from Mus musculus (Mouse).